The following is a 252-amino-acid chain: uncharacterized protein (252 aa).

Phosphoserine occurs at positions 195 and 209.

As to expression, testis-specific. Highly expressed in spermatocytes (at protein level).

Functionally, essential for normal spermatogenesis and male fertility. This is an uncharacterized protein from Mus musculus (Mouse).